The following is a 254-amino-acid chain: MVIANSNIIFVAGLGGIGLDTSREIVKSGPKNLVLLDRIDNPAAINELRALNPKVTVTFYSYDVTVPLAETKKLLKTIFDKLKTVDLLINGAGILDDHQIERTIAVNFTGTVNTTTAIMDFWDKRKGGPGGIVANICSVTGFNSIYQVPVYSASKAAALSFTGSIAKLAPITGVTAYSINPGITKTVLVHKFNSWLNVEPRVAELLLDHPTQTTVQCAQNFVKAIEANENGAIWQLDLGRLEAIEWTKHWDSRI.

10–33 (FVAGLGGIGLDTSREIVKSGPKNL) is a binding site for NAD(+). Substrate is bound at residue S138. Y151 serves as the catalytic Proton acceptor.

This sequence belongs to the short-chain dehydrogenases/reductases (SDR) family. As to quaternary structure, homodimer.

The enzyme catalyses a primary alcohol + NAD(+) = an aldehyde + NADH + H(+). It carries out the reaction a secondary alcohol + NAD(+) = a ketone + NADH + H(+). This Drosophila nigra (Fruit fly) protein is Alcohol dehydrogenase (Adh).